The sequence spans 493 residues: UDP-N-acetylmuramoyl-L-alanyl-D-glutamate--2,6-diaminopimelate ligase (493 aa).

A UDP-N-acetyl-alpha-D-muramoyl-L-alanyl-D-glutamate-binding site is contributed by Thr32. Position 110 to 116 (110 to 116) interacts with ATP; it reads GTNGKTT. UDP-N-acetyl-alpha-D-muramoyl-L-alanyl-D-glutamate contacts are provided by residues Asn151, 152–153, Ser179, and Arg187; that span reads TT. An N6-carboxylysine modification is found at Lys219. Meso-2,6-diaminopimelate is bound by residues Arg386, 410–413, Gly460, and Glu464; that span reads DNPR. Positions 410-413 match the Meso-diaminopimelate recognition motif motif; the sequence is DNPR.

The protein belongs to the MurCDEF family. MurE subfamily. Requires Mg(2+) as cofactor. Carboxylation is probably crucial for Mg(2+) binding and, consequently, for the gamma-phosphate positioning of ATP.

The protein resides in the cytoplasm. It carries out the reaction UDP-N-acetyl-alpha-D-muramoyl-L-alanyl-D-glutamate + meso-2,6-diaminopimelate + ATP = UDP-N-acetyl-alpha-D-muramoyl-L-alanyl-gamma-D-glutamyl-meso-2,6-diaminopimelate + ADP + phosphate + H(+). The protein operates within cell wall biogenesis; peptidoglycan biosynthesis. Catalyzes the addition of meso-diaminopimelic acid to the nucleotide precursor UDP-N-acetylmuramoyl-L-alanyl-D-glutamate (UMAG) in the biosynthesis of bacterial cell-wall peptidoglycan. The polypeptide is UDP-N-acetylmuramoyl-L-alanyl-D-glutamate--2,6-diaminopimelate ligase (Lactiplantibacillus plantarum (strain ATCC BAA-793 / NCIMB 8826 / WCFS1) (Lactobacillus plantarum)).